We begin with the raw amino-acid sequence, 131 residues long: Large ribosomal subunit protein bL12 (131 aa).

Basic and acidic residues predominate over residues 100–125 (STPKPIKEGISKEDAEAAKKQLEDAG). Positions 100–131 (STPKPIKEGISKEDAEAAKKQLEDAGGKVSIK) are disordered.

This sequence belongs to the bacterial ribosomal protein bL12 family. Homodimer. Part of the ribosomal stalk of the 50S ribosomal subunit. Forms a multimeric L10(L12)X complex, where L10 forms an elongated spine to which 2 to 4 L12 dimers bind in a sequential fashion. Binds GTP-bound translation factors.

In terms of biological role, forms part of the ribosomal stalk which helps the ribosome interact with GTP-bound translation factors. Is thus essential for accurate translation. This Cyanothece sp. (strain PCC 7425 / ATCC 29141) protein is Large ribosomal subunit protein bL12.